The following is a 357-amino-acid chain: 3-isopropylmalate dehydrogenase (357 aa).

76-89 serves as a coordination point for NAD(+); it reads GYQWESLDISVRPE. Substrate is bound by residues arginine 96, arginine 106, arginine 134, and aspartate 224. Positions 224, 248, and 252 each coordinate Mg(2+). 282–294 serves as a coordination point for NAD(+); it reads GSAPDIAGQNIAN.

Belongs to the isocitrate and isopropylmalate dehydrogenases family. LeuB type 1 subfamily. As to quaternary structure, homodimer. Requires Mg(2+) as cofactor. The cofactor is Mn(2+).

Its subcellular location is the cytoplasm. It carries out the reaction (2R,3S)-3-isopropylmalate + NAD(+) = 4-methyl-2-oxopentanoate + CO2 + NADH. It functions in the pathway amino-acid biosynthesis; L-leucine biosynthesis; L-leucine from 3-methyl-2-oxobutanoate: step 3/4. In terms of biological role, catalyzes the oxidation of 3-carboxy-2-hydroxy-4-methylpentanoate (3-isopropylmalate) to 3-carboxy-4-methyl-2-oxopentanoate. The product decarboxylates to 4-methyl-2 oxopentanoate. In Hydrogenovibrio crunogenus (strain DSM 25203 / XCL-2) (Thiomicrospira crunogena), this protein is 3-isopropylmalate dehydrogenase.